The sequence spans 891 residues: Major core protein OPG136 precursor (891 aa).

The propeptide occupies 615-697 (SPEGEETIIC…ILDRIITNAG (83 aa)).

It belongs to the orthopxvirus protein OPG136 family. As to quaternary structure, interacts with P39/A4. The precursor is cleaved by OPG083 to give rise to the 62 kDa mature protein during virion maturation. Proteolytic cleavage of major core proteins OPG136, OPG129, and OPG098, which occurs at a late stage of core formation, is required for production of infectious mature virions (MV).

Its subcellular location is the virion. Its function is as follows. Core protein 4a is the most abundant virion protein. Major component of the virion core that undergoes proteolytic processing during the immature virion (IV) to mature virion (MV) transition. In Cynomys gunnisoni (Gunnison's prairie dog), this protein is Major core protein OPG136 precursor (OPG136).